The primary structure comprises 570 residues: MGVKTFTHSSSSHSQEMLGKLNMLRNDGHFCDITIRVQDKIFRAHKVVLAACSDFFRTKLVGQAEDENKNVLDLHHVTVTGFIPLLEYAYTATLSINTENIIDVLAAASYMQMFSVASTCSEFMKSSILWNTPNSQPEKGLDAGQENNSNCNFTSRDGSISPVSSECSVVERTIPVCRESRRKRKSYIVMSPESPVKCGTQTSSPQVLNSSASYSENRNQPVDSSLAFPWTFPFGIDRRIQPEKVKQAENTRTLELPGPSETGRRMADYVTCESTKTTLPLGTEEDVRVKVERLSDEEVHEEVSQPVSASQSSLSDQQTVPGSEQVQEDLLISPQSSSIGSVDEGVSEGLPTLQSTSSTNAPPDDDDRLENVQYPYQLYIAPSTSSTERPSPNGPDRPFQCPTCGVRFTRIQNLKQHMLIHSGIKPFQCDRCGKKFTRAYSLKMHRLKHEGKRCFRCQICSATFTSFGEYKHHMRVSRHIIRKPRIYECKTCGAMFTNSGNLIVHLRSLNHEASELANYFQSSDFLVPDYLNQEQEETLVQYDLGEHGFESNSSVQMPVISQYHSKGKEP.

Lys-4 participates in a covalent cross-link: Glycyl lysine isopeptide (Lys-Gly) (interchain with G-Cter in SUMO2). One can recognise a BTB domain in the interval Cys-31 to Thr-98. Residues Ser-135, Ser-159, Ser-161, Ser-165, Ser-191, and Ser-194 each carry the phosphoserine modification. 2 disordered regions span residues Ser-194–Gln-220 and Glu-243–Ala-267. The segment covering Gly-199–Gln-220 has biased composition (polar residues). Residue Thr-200 is modified to Phosphothreonine. Residue Lys-290 forms a Glycyl lysine isopeptide (Lys-Gly) (interchain with G-Cter in SUMO2) linkage. The tract at residues Ser-295–Leu-369 is disordered. Residues Ser-304–Gln-318 are compositionally biased toward low complexity. Residues Thr-352 to Ala-361 show a composition bias toward polar residues. C2H2-type zinc fingers lie at residues Phe-399–His-421, Phe-427–His-449, Phe-455–His-479, and Tyr-487–His-511.

It is found in the nucleus. Functionally, may be involved in transcriptional regulation. This chain is Zinc finger and BTB domain-containing protein 44 (ZBTB44), found in Homo sapiens (Human).